Here is a 413-residue protein sequence, read N- to C-terminus: Monacolin J acid methylbutanoyltransferase (413 aa).

R73 lines the monacolin J pocket. The active-site Acyl-ester intermediate is the S76. R173, Y188, and Y258 together coordinate monacolin J. G366 contacts 2-methylbutanoate. Residues E388 and W390 each contribute to the monacolin J site.

Belongs to the class-A beta-lactamase family. Interacts with LovF.

It carries out the reaction monacolin J carboxylate + (S)-2-methylbutanoyl-[2-methylbutanoate polyketide synthase] = lovastatin carboxylate + holo-[2-methylbutanoate polyketide synthase]. It participates in polyketide biosynthesis; lovastatin biosynthesis. Its function is as follows. Monacolin J acid methylbutanoyltransferase; part of the gene cluster that mediates the biosynthesis of lovastatin (also known as mevinolin, mevacor or monacolin K), a hypolipidemic inhibitor of (3S)-hydroxymethylglutaryl-coenzyme A (HMG-CoA) reductase (HMGR). The first step in the biosynthesis of lovastatin is the production of dihydromonacolin L acid by the lovastatin nonaketide synthase lovB and the trans-acting enoyl reductase lovC via condensation of one acetyl-CoA unit and 8 malonyl-CoA units. Dihydromonacolin L acid is released from lovB by the thioesterase lovG. Next, dihydromonacolin L acid is oxidized by the dihydromonacolin L monooxygenase lovA twice to form monacolin J acid. The 2-methylbutyrate moiety of lovastatin is synthesized by the lovastatin diketide synthase lovF via condensation of one acetyl-CoA unit and one malonyl-CoA unit. Finally, the covalent attachment of this moiety to monacolin J acid is catalyzed by the transesterase lovD to yield lovastatin. LovD has broad substrate specificity and can also convert monacolin J to simvastatin using alpha-dimethylbutanoyl-S-methyl-3-mercaptopropionate (DMB-S-MMP) as the thioester acyl donor, and can also catalyze the reverse reaction and function as hydrolase in vitro. LovD has much higher activity with LovF-bound 2-methylbutanoate than with free diketide substrates. In Aspergillus terreus (strain NIH 2624 / FGSC A1156), this protein is Monacolin J acid methylbutanoyltransferase.